We begin with the raw amino-acid sequence, 124 residues long: Small ribosomal subunit protein uS12 (124 aa).

The residue at position 89 (D89) is a 3-methylthioaspartic acid. A disordered region spans residues 104–124 (TAGVENRKQSRSKYGAKRPKK). Positions 112–124 (QSRSKYGAKRPKK) are enriched in basic residues.

It belongs to the universal ribosomal protein uS12 family. In terms of assembly, part of the 30S ribosomal subunit. Contacts proteins S8 and S17. May interact with IF1 in the 30S initiation complex.

Functionally, with S4 and S5 plays an important role in translational accuracy. Its function is as follows. Interacts with and stabilizes bases of the 16S rRNA that are involved in tRNA selection in the A site and with the mRNA backbone. Located at the interface of the 30S and 50S subunits, it traverses the body of the 30S subunit contacting proteins on the other side and probably holding the rRNA structure together. The combined cluster of proteins S8, S12 and S17 appears to hold together the shoulder and platform of the 30S subunit. This chain is Small ribosomal subunit protein uS12, found in Pseudothermotoga lettingae (strain ATCC BAA-301 / DSM 14385 / NBRC 107922 / TMO) (Thermotoga lettingae).